Reading from the N-terminus, the 353-residue chain is MSGNTFGRIFRLTTYGESHGPGLGGVVDGCPAGVPLDESVIQRELDLRRPGSASAGLAGTARKEPDTVRLLSGVFEGVTTGTPIGFHIANEDQRSRDYGDLAKLYRPGHADITYDAKYGLRDFRGGGRASGRETVSRVAGGAVALALLAMHDIEVRAYTVEIGGVPADVVDPAGAQGRLFFSPDPDVVPAWESLVHDVRAEGDTLGGIVQVEATGVPAGLGEPVFDKLDALLAHAMMSVGAVKAVEVGAGLEAARLRGSENNDPIIPGGFHTNHAGGILGGISNGQPIVVRATVKPIPSIAQEQITIDTNGRPAPLRVGGRHDICAIPRVVPVLKAMAALVLADSLLLQRRMG.

Arg-48 contributes to the NADP(+) binding site. FMN-binding positions include 128 to 130, Gly-280, 295 to 299, and Arg-321; these read RAS and KPIPS.

It belongs to the chorismate synthase family. Homotetramer. The cofactor is FMNH2.

The catalysed reaction is 5-O-(1-carboxyvinyl)-3-phosphoshikimate = chorismate + phosphate. The protein operates within metabolic intermediate biosynthesis; chorismate biosynthesis; chorismate from D-erythrose 4-phosphate and phosphoenolpyruvate: step 7/7. Functionally, catalyzes the anti-1,4-elimination of the C-3 phosphate and the C-6 proR hydrogen from 5-enolpyruvylshikimate-3-phosphate (EPSP) to yield chorismate, which is the branch point compound that serves as the starting substrate for the three terminal pathways of aromatic amino acid biosynthesis. This reaction introduces a second double bond into the aromatic ring system. The sequence is that of Chorismate synthase from Nitratidesulfovibrio vulgaris (strain DSM 19637 / Miyazaki F) (Desulfovibrio vulgaris).